The chain runs to 463 residues: O-phospho-L-seryl-tRNA:Cys-tRNA synthase 2 (463 aa).

Pyridoxal 5'-phosphate contacts are provided by residues 154–155, asparagine 259, and 282–284; these read AR and SGH. Lysine 285 bears the N6-(pyridoxal phosphate)lysine mark.

The protein belongs to the SepCysS family. As to quaternary structure, homodimer. Interacts with SepRS. Pyridoxal 5'-phosphate serves as cofactor.

The enzyme catalyses O-phospho-L-seryl-tRNA(Cys) + hydrogen sulfide + H(+) = L-cysteinyl-tRNA(Cys) + phosphate. In terms of biological role, converts O-phospho-L-seryl-tRNA(Cys) (Sep-tRNA(Cys)) to L-cysteinyl-tRNA(Cys) (Cys-tRNA(Cys)). This is O-phospho-L-seryl-tRNA:Cys-tRNA synthase 2 from Methanocella arvoryzae (strain DSM 22066 / NBRC 105507 / MRE50).